A 103-amino-acid polypeptide reads, in one-letter code: Phosphoribosyl-ATP pyrophosphatase (103 aa).

The protein belongs to the PRA-PH family.

The protein localises to the cytoplasm. The enzyme catalyses 1-(5-phospho-beta-D-ribosyl)-ATP + H2O = 1-(5-phospho-beta-D-ribosyl)-5'-AMP + diphosphate + H(+). It functions in the pathway amino-acid biosynthesis; L-histidine biosynthesis; L-histidine from 5-phospho-alpha-D-ribose 1-diphosphate: step 2/9. This chain is Phosphoribosyl-ATP pyrophosphatase, found in Cereibacter sphaeroides (strain KD131 / KCTC 12085) (Rhodobacter sphaeroides).